The following is a 339-amino-acid chain: tRNA N6-adenosine threonylcarbamoyltransferase (339 aa).

H111 and H115 together coordinate Fe cation. Substrate contacts are provided by residues 134–138 (LVSGG), D167, G180, and N270. D298 is a Fe cation binding site.

Belongs to the KAE1 / TsaD family. Fe(2+) is required as a cofactor.

The protein localises to the cytoplasm. The catalysed reaction is L-threonylcarbamoyladenylate + adenosine(37) in tRNA = N(6)-L-threonylcarbamoyladenosine(37) in tRNA + AMP + H(+). Required for the formation of a threonylcarbamoyl group on adenosine at position 37 (t(6)A37) in tRNAs that read codons beginning with adenine. Is involved in the transfer of the threonylcarbamoyl moiety of threonylcarbamoyl-AMP (TC-AMP) to the N6 group of A37, together with TsaE and TsaB. TsaD likely plays a direct catalytic role in this reaction. This chain is tRNA N6-adenosine threonylcarbamoyltransferase, found in Alkalilimnicola ehrlichii (strain ATCC BAA-1101 / DSM 17681 / MLHE-1).